The following is a 543-amino-acid chain: Probable protein kinase UbiB (543 aa).

One can recognise a Protein kinase domain in the interval 123-501; the sequence is DFDSQALASA…QQRQGQSRYL (379 aa). ATP contacts are provided by residues 129 to 137 and lysine 152; that span reads LASASIAQV. Aspartate 287 serves as the catalytic Proton acceptor. The helical transmembrane segment at 517 to 539 threads the bilayer; the sequence is LADATEVSTGFIVAGALAWFIGW.

This sequence belongs to the ABC1 family. UbiB subfamily.

The protein resides in the cell inner membrane. Its pathway is cofactor biosynthesis; ubiquinone biosynthesis [regulation]. Its function is as follows. Is probably a protein kinase regulator of UbiI activity which is involved in aerobic coenzyme Q (ubiquinone) biosynthesis. This is Probable protein kinase UbiB from Yersinia pseudotuberculosis serotype O:1b (strain IP 31758).